The primary structure comprises 184 residues: mRNA transport regulator MTR2 (184 aa).

Residues K111–N135 are disordered. Over residues I120 to N129 the composition is skewed to polar residues. Residue T125 is modified to Phosphothreonine.

As to quaternary structure, interacts with MEX67.

It is found in the nucleus. In terms of biological role, affects mRNA transport from the nucleus to the cytoplasm. This Saccharomyces cerevisiae (strain ATCC 204508 / S288c) (Baker's yeast) protein is mRNA transport regulator MTR2 (MTR2).